The sequence spans 261 residues: Hemin import ATP-binding protein HmuV (261 aa).

The ABC transporter domain maps to 7–243 (LRGQNLSLQF…EIIDAVYGYK (237 aa)). 39 to 46 (GPNGAGKS) contacts ATP.

It belongs to the ABC transporter superfamily. Heme (hemin) importer (TC 3.A.1.14.5) family. The complex is composed of two ATP-binding proteins (HmuV), two transmembrane proteins (HmuU) and a solute-binding protein (HmuT).

Its subcellular location is the cell inner membrane. Its function is as follows. Part of the ABC transporter complex HmuTUV involved in hemin import. Responsible for energy coupling to the transport system. The polypeptide is Hemin import ATP-binding protein HmuV (Vibrio vulnificus (strain YJ016)).